The primary structure comprises 395 residues: Phosphoprotein (395 aa).

A disordered region spans residues 178 to 217; the sequence is NGVLHGSEIRSKSSSGVIPGVPQSRPQLASSPAHADPAPA. The span at 206–217 shows a compositional bias: low complexity; the sequence is ASSPAHADPAPA. The tract at residues 220 to 283 is multimerization; that stretch reads ENVKEIIELL…ITTIKIMDPS (64 aa).

The protein belongs to the rubulavirus/avulavirus P protein family. Homotetramer. Interacts (via multimerization domain) with polymerase L; this interaction forms the polymerase L-P complex. Interacts (via N-terminus) with N0 (via Ncore); this interaction allows P to chaperon N0 to avoid N polymerization before encapsidation. Interacts (via C-terminus) with N-RNA template; this interaction positions the polymerase on the template for both transcription and replication. Interacts with host ARHGAP26; this interaction promotes host RHOA activation. Interacts with host KPNA1 and KPNA6.

It localises to the host cytoplasm. Its function is as follows. Essential cofactor of the RNA polymerase L that plays a central role in the transcription and replication by forming the polymerase complex with RNA polymerase L and recruiting L to the genomic N-RNA template for RNA synthesis. Also plays a central role in the encapsidation of nascent RNA chains by forming the encapsidation complex with the nucleocapsid protein N (N-P complex). Acts as a chaperone for newly synthesized free N protein, so-called N0, allowing encapsidation of nascent RNA chains during replication. The nucleoprotein protein N prevents excessive phosphorylation of P, which leads to down-regulation of viral transcription/ replication. Participates, together with N, in the formation of viral factories (viroplasms), which are large inclusions in the host cytoplasm where replication takes place. Also plays a role in viral growth by promoting host RHOA activation and thus actin formation via ARHGAP26 inhibition. This is Phosphoprotein (P/V) from Homo sapiens (Human).